Here is a 57-residue protein sequence, read N- to C-terminus: Light-harvesting protein B-808/866 alpha chain (57 aa).

Met1 is modified (N-formylmethionine). The Cytoplasmic segment spans residues 1–10 (MQPRSPVRTN). Residues 11–30 (IVIFTILGFVVALLIHFIVL) form a helical membrane-spanning segment. Residue His26 coordinates a bacteriochlorophyll. The Periplasmic segment spans residues 31–57 (SSPEYNWLSNAEGGALLLSAARALFGI).

It belongs to the antenna complex alpha subunit family. In terms of assembly, the core complex is formed by different alpha and beta chains, binding bacteriochlorophyll molecules, and arranged most probably in tetrameric structures disposed around the reaction center. The non-pigmented gamma chains may constitute additional components.

Its subcellular location is the cell membrane. Its function is as follows. Antenna complexes are light-harvesting systems, which transfer the excitation energy to the reaction centers. The sequence is that of Light-harvesting protein B-808/866 alpha chain (puf2A) from Chloroflexus aurantiacus (strain ATCC 29366 / DSM 635 / J-10-fl).